Consider the following 219-residue polypeptide: MDTWHDALGGEKQQPYFQEILNAVRQERLSGQIIYPPAADVFNAFRLTAFDRVKAVILGQDPYHGAGQAHGLAFSVRQGIRIPPSLLNIYKELETDIEGFSIPAHGCLTAWAEQGVLLLNTVLTVRAGQAHSHALLGWERFTDTVIRQLATHRKHLVFMLWGGYAQQKGRLIDSQNHLILTAPHPSPLSAYRGFFGCRHFSQANSYLSRHGIDPINWKL.

The Proton acceptor role is filled by Asp-61.

The protein belongs to the uracil-DNA glycosylase (UDG) superfamily. UNG family.

The protein localises to the cytoplasm. The catalysed reaction is Hydrolyzes single-stranded DNA or mismatched double-stranded DNA and polynucleotides, releasing free uracil.. Excises uracil residues from the DNA which can arise as a result of misincorporation of dUMP residues by DNA polymerase or due to deamination of cytosine. This is Uracil-DNA glycosylase from Neisseria meningitidis serogroup B (strain ATCC BAA-335 / MC58).